The primary structure comprises 141 residues: NADH-quinone oxidoreductase subunit A (141 aa).

3 consecutive transmembrane segments (helical) span residues 24 to 44 (LLAL…LLLA), 77 to 97 (VPFY…AFIA), and 106 to 126 (LGWA…VALI).

This sequence belongs to the complex I subunit 3 family. As to quaternary structure, NDH-1 is composed of 14 different subunits. Subunits NuoA, H, J, K, L, M, N constitute the membrane sector of the complex.

It is found in the cell inner membrane. It carries out the reaction a quinone + NADH + 5 H(+)(in) = a quinol + NAD(+) + 4 H(+)(out). In terms of biological role, NDH-1 shuttles electrons from NADH, via FMN and iron-sulfur (Fe-S) centers, to quinones in the respiratory chain. The immediate electron acceptor for the enzyme in this species is believed to be ubiquinone. Couples the redox reaction to proton translocation (for every two electrons transferred, four hydrogen ions are translocated across the cytoplasmic membrane), and thus conserves the redox energy in a proton gradient. The chain is NADH-quinone oxidoreductase subunit A from Syntrophotalea carbinolica (strain DSM 2380 / NBRC 103641 / GraBd1) (Pelobacter carbinolicus).